The primary structure comprises 83 residues: Glutaredoxin 3 (83 aa).

The region spanning 2–83 is the Glutaredoxin domain; it reads ANVEIYTKET…ARGGLDPLLK (82 aa). A disulfide bridge links cysteine 12 with cysteine 15.

Belongs to the glutaredoxin family. In terms of assembly, monomer.

In terms of biological role, the disulfide bond functions as an electron carrier in the glutathione-dependent synthesis of deoxyribonucleotides by the enzyme ribonucleotide reductase. In addition, it is also involved in reducing some disulfides in a coupled system with glutathione reductase. The sequence is that of Glutaredoxin 3 (grxC) from Escherichia coli O157:H7.